Here is a 735-residue protein sequence, read N- to C-terminus: Stonin-1 (735 aa).

The interval 1-35 (MCSTNPGKWVTFDDDPAVQSSQKSKNFPLENQGVC) is disordered. Residues 275–408 (GWSFMLRIPE…KLPAVSKPKK (134 aa)) enclose the SHD domain. The 304-residue stretch at 412 to 715 (EQEISLEIVD…ACYNIQVEIE (304 aa)) folds into the MHD domain.

This sequence belongs to the Stoned B family. Ubiquitous.

Its subcellular location is the cytoplasm. The protein localises to the membrane. Functionally, may be involved in the endocytic machinery. This chain is Stonin-1 (STON1), found in Homo sapiens (Human).